We begin with the raw amino-acid sequence, 204 residues long: uncharacterized protein (204 aa).

Residues 1–10 (MQQAITQQEK) are compositionally biased toward polar residues. Disordered stretches follow at residues 1-20 (MQQA…LPNR) and 70-99 (DEAR…KNTE). The 74-residue stretch at 131–204 (VRDSKKFGLQ…TVTDCVVIGM (74 aa)) folds into the SPOR domain.

This sequence to E.coli FtsN repeat regions.

This is an uncharacterized protein from Haemophilus influenzae (strain ATCC 51907 / DSM 11121 / KW20 / Rd).